The sequence spans 506 residues: Nostrin (506 aa).

The 260-residue stretch at 1–260 (MRDPLTDCPY…AISKIDIEKD (260 aa)) folds into the F-BAR domain. A Phosphoserine modification is found at Ser114. Positions 160–222 (SMTEKEKRKL…LELEKERIQL (63 aa)) form a coiled coil. Residues 292-372 (AMDKERRKSL…SYKLSSMLAE (81 aa)) enclose the REM-1 domain. Residues 438-497 (LSSRLCKALYSFQARQDDELNLEKGDIVIIHEKKEGGWWFGSLNGKKGHFPAAYVEELPS) enclose the SH3 domain. At Ser479 the chain carries Phosphoserine.

In terms of assembly, homotrimer. Interacts with DAB2. Interacts with NOS3, DNM2, WASL and CAV1. Interacts (via SH3 domain) with DNM2; this interaction allows the recruitment of NOS3 to dynamin-positive structures. Expressed at highest levels in heart, kidney, placenta and lung, and at lowest levels in brain, thymus and spleen. Present in vascular endothelial cells and placenta. Over-expressed in placenta from women with pre-eclampsia (at protein level).

The protein resides in the cell membrane. Its subcellular location is the cytoplasmic vesicle. It is found in the cytoplasm. It localises to the cytoskeleton. The protein localises to the nucleus. Functionally, multivalent adapter protein which may decrease NOS3 activity by inducing its translocation away from the plasma membrane. The protein is Nostrin of Homo sapiens (Human).